The chain runs to 202 residues: Small ribosomal subunit protein uS4c (202 aa).

One can recognise an S4 RNA-binding domain in the interval M90–I153.

This sequence belongs to the universal ribosomal protein uS4 family. Part of the 30S ribosomal subunit. Contacts protein S5. The interaction surface between S4 and S5 is involved in control of translational fidelity.

Its subcellular location is the plastid. The protein resides in the chloroplast. One of the primary rRNA binding proteins, it binds directly to 16S rRNA where it nucleates assembly of the body of the 30S subunit. Its function is as follows. With S5 and S12 plays an important role in translational accuracy. The polypeptide is Small ribosomal subunit protein uS4c (rps4) (Cyathophorum bulbosum (Moss)).